We begin with the raw amino-acid sequence, 70 residues long: V-type proton ATPase subunit e1 (70 aa).

2 helical membrane passes run 1–21 (MGFLITTLIFVVVGIIASLCV) and 36–56 (LTLVITATVCCWMMWAIVYIA).

Belongs to the V-ATPase e1/e2 subunit family. In terms of assembly, V-ATPase is a heteromultimeric enzyme composed of a peripheral catalytic V1 complex (components A to H) attached to an integral membrane V0 proton pore complex (components: a, c, c'', d and e).

It localises to the golgi apparatus. The protein localises to the trans-Golgi network membrane. Its function is as follows. Subunit of the integral membrane V0 complex of vacuolar ATPase. V-ATPase is responsible for acidifying a variety of intracellular compartments in eukaryotic cells. The protein is V-type proton ATPase subunit e1 (VHA-e1) of Arabidopsis thaliana (Mouse-ear cress).